Here is a 348-residue protein sequence, read N- to C-terminus: Glycerol-1-phosphate dehydrogenase [NAD(P)+] (348 aa).

Residues 94–98 (GKVID) and 116–119 (TTAS) contribute to the NAD(+) site. Asp-121 is a substrate binding site. Residue Ser-125 participates in NAD(+) binding. Substrate is bound at residue Asp-168. Asp-168 and His-248 together coordinate Zn(2+). Position 252 (His-252) interacts with substrate. His-264 is a Zn(2+) binding site.

Belongs to the glycerol-1-phosphate dehydrogenase family. In terms of assembly, homooctamer. Zn(2+) is required as a cofactor.

The protein resides in the cytoplasm. The enzyme catalyses sn-glycerol 1-phosphate + NAD(+) = dihydroxyacetone phosphate + NADH + H(+). It catalyses the reaction sn-glycerol 1-phosphate + NADP(+) = dihydroxyacetone phosphate + NADPH + H(+). It functions in the pathway membrane lipid metabolism; glycerophospholipid metabolism. Catalyzes the NAD(P)H-dependent reduction of dihydroxyacetonephosphate (DHAP or glycerone phosphate) to glycerol 1-phosphate (G1P). The G1P thus generated is used as the glycerophosphate backbone of phospholipids in the cellular membranes of Archaea. This Methanobrevibacter smithii (strain ATCC 35061 / DSM 861 / OCM 144 / PS) protein is Glycerol-1-phosphate dehydrogenase [NAD(P)+].